We begin with the raw amino-acid sequence, 398 residues long: Pheromone receptor transcription activator (398 aa).

Disordered regions lie at residues 1–30, 101–125, and 254–317; these read MMDE…YLED, TDQN…ESGY, and PSTG…DRPP. One can recognise an MADS-box domain in the interval 20–74; sequence GSSQGNSYLEDRQKRQNTFTKRKAGIFKKANELALLTGSEVMVLVVSETGLVHTF. Low complexity predominate over residues 106-121; that stretch reads SQASQAKQSSAQLSDS. Composition is skewed to polar residues over residues 262–273 and 282–294; these read TTGQHSVNSPPS and NKSF…PQTP.

Its subcellular location is the nucleus. In response to mating-pheromone signaling or nitrogen starvation, it interacts with mat1-Pc. This activates the expression of one of two mating-type-specific genes sxa2 or map3, which leads to inactivation of the P-factor. May also interact with mat1-Mc. The chain is Pheromone receptor transcription activator (map1) from Schizosaccharomyces pombe (strain 972 / ATCC 24843) (Fission yeast).